A 424-amino-acid chain; its full sequence is tRNA (guanine-N(7)-)-methyltransferase non-catalytic subunit wuho (424 aa).

The segment at 42–92 is disordered; the sequence is LKGHTSQSQESCTAAAAASTATAASGQAPGGKEQQLANQPEEGGTSASASG. Low complexity predominate over residues 46-68; sequence TSQSQESCTAAAAASTATAASGQ. WD repeat units lie at residues 96–137, 184–223, 227–265, and 324–364; these read ATST…ARLL, GHLSVVYDILWSEDQQHIITCDRDDKIRVTNYPATFDIHS, GHREFVSGLALLTEQHIASASGDKTLRVWNYIQGKELLQ, and AGSW…PASS.

It belongs to the WD repeat TRM82 family. In terms of assembly, forms a heterodimer with the catalytic subunit Mettl1. Interacts with mei-P26 and weakly interacts with bgcn; required for the function or formation of the mei-P26-bgcn-bam-sxl complex. Interacts with nanos; may be involved in mei-P26-dependent derepression of the BMP signaling pathway. Interacts with Myc; the interaction may be mediated by mei-P26 and may be involved in the regulation of ribosome biogenesis. In terms of tissue distribution, in testis, it is present at high level in hub cells, a niche for germline stem cells of testis. Ubiquitously expressed in all testicular cells throughout spermatogenesis. Ubiquitously expressed in all germline and somatic cells of the ovary.

It localises to the nucleus. The protein resides in the cytoplasm. The protein operates within tRNA modification; N(7)-methylguanine-tRNA biosynthesis. Required for the Mettl1-dependent formation of N(7)-methylguanine at position 46 (m7G46) in tRNA. In the Mettl1-wuho methyltransferase complex, it is required to stabilize and induce conformational changes of the catalytic subunit. Required for binding of nanos mRNA and repression of translation by the mei-P26-bgcn-bam-sxl complex. May cooperate with mei-P26 and nanos to derepress the BMP signaling pathway. May cooperate with mei-P26 to suppress expression of a subset of microRNAs. May cooperate with mei-P26 to regulate bam expression levels in germline cells during gametogenesis. Required to promote mitosis to meiosis transition during gametogenesis. May regulate germline cell division in part by regulating ribosome biogenesis. The protein is tRNA (guanine-N(7)-)-methyltransferase non-catalytic subunit wuho of Drosophila melanogaster (Fruit fly).